Here is a 300-residue protein sequence, read N- to C-terminus: GTPase Era (300 aa).

The 169-residue stretch at 8–176 folds into the Era-type G domain; that stretch reads RCGYVAIVGR…EKVIADHLPE (169 aa). Positions 16 to 23 are G1; sequence GRPNVGKS. GTP is bound at residue 16–23; that stretch reads GRPNVGKS. Positions 42–46 are G2; sequence QTTRH. Residues 63–66 form a G3 region; it reads DTPG. Residues 63-67 and 125-128 contribute to the GTP site; these read DTPGM and NKTD. Positions 125–128 are G4; it reads NKTD. The interval 155–157 is G5; sequence ISA. The KH type-2 domain occupies 199-283; it reads VREKIMRQLG…MLNLWVKVKG (85 aa).

It belongs to the TRAFAC class TrmE-Era-EngA-EngB-Septin-like GTPase superfamily. Era GTPase family. As to quaternary structure, monomer.

Its subcellular location is the cytoplasm. It is found in the cell inner membrane. Functionally, an essential GTPase that binds both GDP and GTP, with rapid nucleotide exchange. Plays a role in 16S rRNA processing and 30S ribosomal subunit biogenesis and possibly also in cell cycle regulation and energy metabolism. The polypeptide is GTPase Era (Pseudomonas fluorescens (strain Pf0-1)).